The primary structure comprises 189 residues: MTSPSPTARRTRLRRRTALALAAAATAALTLSACGTDTKANTPATRAGSGNAAAAKADTVALLDDTTLAVPGDKPSALFFFSVGCGECAGGAKSLDKAAQAFDKAGKKANFLAVDMDPNESKQTIMQFLDYIKAPALPATIDKGAALSQRYQVAALSTLIVVAPQGKVTYRATDPSADQIQDALKKAGA.

Residues 1 to 27 constitute a signal peptide (tat-type signal); the sequence is MTSPSPTARRTRLRRRTALALAAAATA. The Thioredoxin domain maps to 38–189; that stretch reads TKANTPATRA…IQDALKKAGA (152 aa).

In terms of processing, predicted to be exported by the Tat system. The position of the signal peptide cleavage has not been experimentally proven.

It localises to the secreted. Probable mercury binding protein. This Streptomyces lividans protein is Mercury resistance operon ORF3.